A 269-amino-acid polypeptide reads, in one-letter code: Chymotrypsin-like elastase family member 2A (269 aa).

The N-terminal stretch at Met-1 to Ser-16 is a signal peptide. Residues Cys-17–Arg-28 constitute a propeptide, activation peptide. Residues Val-29 to Ala-267 form the Peptidase S1 domain. Cysteines 58 and 74 form a disulfide. Catalysis depends on charge relay system residues His-73 and Asp-121. Disulfide bonds link Cys-155-Cys-222, Cys-186-Cys-202, and Cys-212-Cys-243. The active-site Charge relay system is the Ser-216.

Belongs to the peptidase S1 family. Elastase subfamily. As to quaternary structure, interacts with CPA1. Interacts with SERPINA1. As to expression, pancreas.

The protein resides in the secreted. The enzyme catalyses Preferential cleavage: Leu-|-Xaa, Met-|-Xaa and Phe-|-Xaa. Hydrolyzes elastin.. Elastase that enhances insulin signaling and might have a physiologic role in cellular glucose metabolism. Circulates in plasma and reduces platelet hyperactivation, triggers both insulin secretion and degradation, and increases insulin sensitivity. The chain is Chymotrypsin-like elastase family member 2A (CELA2A) from Sus scrofa (Pig).